Here is a 20-residue protein sequence, read N- to C-terminus: Peptidase T (20 aa).

It belongs to the peptidase M20B family. The cofactor is Zn(2+). Co(2+) serves as cofactor.

The protein resides in the cell envelope. It catalyses the reaction Release of the N-terminal residue from a tripeptide.. Its activity is regulated as follows. Inhibited by the chelating agents EDTA and 1,10-phenanthroline, by bestatin and amastatin, p-hydroxymercuribenzoate and some divalent cations at high concentration. Cleaves a wide range of dipeptides and tripeptides, but does not display activity against larger peptides. May have a role in the survival of F.nucleatum in the subgingival environment of the mouth. This is Peptidase T (pepT) from Fusobacterium nucleatum subsp. polymorphum (Fusobacterium polymorphum).